Consider the following 293-residue polypeptide: Signal recognition particle receptor FtsY (293 aa).

Residues Gly93–Thr100, Asp175–Arg179, and Thr239–Asp242 contribute to the GTP site.

The protein belongs to the GTP-binding SRP family. FtsY subfamily. Part of the signal recognition particle protein translocation system, which is composed of SRP and FtsY. SRP is a ribonucleoprotein composed of Ffh and a 4.5S RNA molecule.

The protein resides in the cell inner membrane. The protein localises to the cytoplasm. The enzyme catalyses GTP + H2O = GDP + phosphate + H(+). In terms of biological role, involved in targeting and insertion of nascent membrane proteins into the cytoplasmic membrane. Acts as a receptor for the complex formed by the signal recognition particle (SRP) and the ribosome-nascent chain (RNC). Interaction with SRP-RNC leads to the transfer of the RNC complex to the Sec translocase for insertion into the membrane, the hydrolysis of GTP by both Ffh and FtsY, and the dissociation of the SRP-FtsY complex into the individual components. This chain is Signal recognition particle receptor FtsY, found in Helicobacter pylori (strain J99 / ATCC 700824) (Campylobacter pylori J99).